The following is a 45-amino-acid chain: Unknown protein from spots 23/28/205 of 2D-PAGE of thylakoid (45 aa).

The protein resides in the plastid. It is found in the chloroplast thylakoid. The sequence is that of Unknown protein from spots 23/28/205 of 2D-PAGE of thylakoid from Pisum sativum (Garden pea).